The sequence spans 483 residues: Isocitrate dehydrogenase [NADP] (483 aa).

Thr-74 serves as a coordination point for NADP(+). Residues Ser-83, Asn-85, Arg-89, Arg-99, and Arg-121 each coordinate D-threo-isocitrate. Asp-232 contacts Mg(2+). NADP(+) contacts are provided by residues His-264–Ile-270 and Asn-277.

This sequence belongs to the isocitrate and isopropylmalate dehydrogenases family. As to quaternary structure, homodimer. Mg(2+) is required as a cofactor. The cofactor is Mn(2+).

It carries out the reaction D-threo-isocitrate + NADP(+) = 2-oxoglutarate + CO2 + NADPH. Catalyzes the oxidative decarboxylation of isocitrate to 2-oxoglutarate and carbon dioxide with the concomitant reduction of NADP(+). This Rickettsia bellii (strain RML369-C) protein is Isocitrate dehydrogenase [NADP] (icd).